Reading from the N-terminus, the 529-residue chain is Tyrosinase (529 aa).

The first 18 residues, 1 to 18, serve as a signal peptide directing secretion; the sequence is MLLAALCCLLWSFRTSAG. Over 19 to 472 the chain is Lumenal; that stretch reads HFPRACASSK…IKPFLEQASR (454 aa). Residues asparagine 86, asparagine 111, and asparagine 161 are each glycosylated (N-linked (GlcNAc...) asparagine). Positions 180, 202, and 211 each coordinate Cu cation. 2 N-linked (GlcNAc...) asparagine glycosylation sites follow: asparagine 230 and asparagine 336. Residues histidine 362 and histidine 366 each contribute to the Cu cation site. The N-linked (GlcNAc...) asparagine glycan is linked to asparagine 370. Residue histidine 389 participates in Cu cation binding. Residues 473–495 traverse the membrane as a helical segment; sequence IWPWLIGAAVVGSVLTAVLGRLT. Topologically, residues 496 to 529 are cytoplasmic; the sequence is SLLCRRKRKQLREERQPLLMEKEDYHSLLYQTHV.

The protein belongs to the tyrosinase family. Forms an OPN3-dependent complex with DCT in response to blue light in melanocytes. Cu(2+) is required as a cofactor. In terms of processing, glycosylated.

Its subcellular location is the melanosome membrane. It is found in the melanosome. It carries out the reaction 2 L-dopa + O2 = 2 L-dopaquinone + 2 H2O. It catalyses the reaction L-tyrosine + O2 = L-dopaquinone + H2O. The enzyme catalyses 2 5,6-dihydroxyindole-2-carboxylate + O2 = 2 indole-5,6-quinone-2-carboxylate + 2 H2O. Functionally, this is a copper-containing oxidase that functions in the formation of pigments such as melanins and other polyphenolic compounds. Catalyzes the initial and rate limiting step in the cascade of reactions leading to melanin production from tyrosine. In addition to hydroxylating tyrosine to DOPA (3,4-dihydroxyphenylalanine), also catalyzes the oxidation of DOPA to DOPA-quinone, and possibly the oxidation of DHI (5,6-dihydroxyindole) to indole-5,6 quinone. This is Tyrosinase (TYR) from Felis catus (Cat).